The following is a 126-amino-acid chain: Holo-[acyl-carrier-protein] synthase (126 aa).

Aspartate 9 and glutamate 58 together coordinate Mg(2+).

Belongs to the P-Pant transferase superfamily. AcpS family. It depends on Mg(2+) as a cofactor.

The protein localises to the cytoplasm. It catalyses the reaction apo-[ACP] + CoA = holo-[ACP] + adenosine 3',5'-bisphosphate + H(+). Functionally, transfers the 4'-phosphopantetheine moiety from coenzyme A to a Ser of acyl-carrier-protein. This Escherichia coli O139:H28 (strain E24377A / ETEC) protein is Holo-[acyl-carrier-protein] synthase.